We begin with the raw amino-acid sequence, 339 residues long: ADP-L-glycero-D-manno-heptose-6-epimerase (339 aa).

NADP(+) is bound by residues 11–12 (FI), 32–33 (DD), K39, K54, 75–79 (EGACS), and N92. Residue Y139 is the Proton acceptor of the active site. K143 provides a ligand contact to NADP(+). N170 provides a ligand contact to substrate. NADP(+)-binding residues include V171 and K179. Residue K179 is the Proton acceptor of the active site. Residues R181, H188, 202 to 205 (FGEY), R215, and Y294 contribute to the substrate site.

The protein belongs to the NAD(P)-dependent epimerase/dehydratase family. HldD subfamily. In terms of assembly, homopentamer. Requires NADP(+) as cofactor.

The enzyme catalyses ADP-D-glycero-beta-D-manno-heptose = ADP-L-glycero-beta-D-manno-heptose. It participates in nucleotide-sugar biosynthesis; ADP-L-glycero-beta-D-manno-heptose biosynthesis; ADP-L-glycero-beta-D-manno-heptose from D-glycero-beta-D-manno-heptose 7-phosphate: step 4/4. Its function is as follows. Catalyzes the interconversion between ADP-D-glycero-beta-D-manno-heptose and ADP-L-glycero-beta-D-manno-heptose via an epimerization at carbon 6 of the heptose. This chain is ADP-L-glycero-D-manno-heptose-6-epimerase, found in Polynucleobacter necessarius subsp. necessarius (strain STIR1).